Here is a 271-residue protein sequence, read N- to C-terminus: Mannosyl-3-phosphoglycerate phosphatase (271 aa).

The active-site Nucleophile is Asp-13. 3 residues coordinate Mg(2+): Asp-13, Asp-15, and Asp-214.

Belongs to the HAD-like hydrolase superfamily. MPGP family. Mg(2+) serves as cofactor.

It localises to the cytoplasm. The catalysed reaction is 2-O-(alpha-D-mannosyl)-3-phosphoglycerate + H2O = (2R)-2-O-(alpha-D-mannosyl)-glycerate + phosphate. The protein is Mannosyl-3-phosphoglycerate phosphatase of Escherichia coli (strain SE11).